The sequence spans 422 residues: MQCDFVDRILNEYDLLNAIVYRSKFTHEVKVGDVIIGGNNPIVVQSMALGGSGDVYQDAREVLELAQAGSELVRIAINSDKAIKSVPYIRDVLINHGFNSKMIIGCGQYEIARLVKQYPECALALGKIRINPGNIGFGDKRDKNFEDIIEFAIKNDIPIRIGVNWGSLDKYLAAKLMHDNSLRGTPDPDYVVLRKALVISAITSAKHAEKVGLPANKIVISCKVSKVRDLISVYTMLSKICDYPLHLGLTEAGSGVKGIVGSSAGISYLLLHGIGNTIRVSLTQQPGESRTNEVKLCQEILQSIGLRNFSVQVTSCPGCNRTNPKYFHQLVSDVNKYVADRMSVWKSANPGVENMTIAVMGCVVNGPGESKHANLGISMPGYGERSVAAVYQNGEKLCTLEGNNIFEQFVSIIENYVSIYYH.

Residues C316, C319, C362, and E369 each contribute to the [4Fe-4S] cluster site.

It belongs to the IspG family. It depends on [4Fe-4S] cluster as a cofactor.

It carries out the reaction (2E)-4-hydroxy-3-methylbut-2-enyl diphosphate + oxidized [flavodoxin] + H2O + 2 H(+) = 2-C-methyl-D-erythritol 2,4-cyclic diphosphate + reduced [flavodoxin]. Its pathway is isoprenoid biosynthesis; isopentenyl diphosphate biosynthesis via DXP pathway; isopentenyl diphosphate from 1-deoxy-D-xylulose 5-phosphate: step 5/6. In terms of biological role, converts 2C-methyl-D-erythritol 2,4-cyclodiphosphate (ME-2,4cPP) into 1-hydroxy-2-methyl-2-(E)-butenyl 4-diphosphate. This Ehrlichia ruminantium (strain Gardel) protein is 4-hydroxy-3-methylbut-2-en-1-yl diphosphate synthase (flavodoxin).